Consider the following 498-residue polypeptide: Probable global transactivator (498 aa).

The Helicase ATP-binding domain maps to 43–206 (RERRGRPHGG…YAIIHFLRCR (164 aa)). ATP is bound at residue 55 to 63 (ADDMGLGKT). The DEAH box signature appears at 157–160 (DEAH). The region spanning 337–493 (ELVQRVLDTP…RTALNYEDIK (157 aa)) is the Helicase C-terminal domain.

It belongs to the SNF2/RAD54 helicase family.

In Orgyia pseudotsugata (Douglas-fir tussock moth), this protein is Probable global transactivator (GTA).